Reading from the N-terminus, the 666-residue chain is Magnesium-chelatase 67 kDa subunit (666 aa).

Residue 37-44 (GRRGTGKT) coordinates ATP. The segment at 327–367 (LPDEEEQMQPPPPPPPPPPPPEPDKPDDPETPPDEAPKDEQ) is disordered. The segment covering 335 to 347 (QPPPPPPPPPPPP) has biased composition (pro residues). Residues 475 to 661 (LIIFVVDASG…SLAETVKSGV (187 aa)) enclose the VWFA domain.

This sequence belongs to the Mg-chelatase subunits D/I family.

The catalysed reaction is protoporphyrin IX + Mg(2+) + ATP + H2O = Mg-protoporphyrin IX + ADP + phosphate + 3 H(+). The protein operates within porphyrin-containing compound metabolism; bacteriochlorophyll biosynthesis. Involved in bacteriochlorophyll biosynthesis; introduces a magnesium ion into protoporphyrin IX to yield Mg-protoporphyrin IX. The polypeptide is Magnesium-chelatase 67 kDa subunit (bchD) (Heliobacterium mobile (Heliobacillus mobilis)).